The sequence spans 164 residues: Large ribosomal subunit protein uL10 (164 aa).

Belongs to the universal ribosomal protein uL10 family. In terms of assembly, part of the ribosomal stalk of the 50S ribosomal subunit. The N-terminus interacts with L11 and the large rRNA to form the base of the stalk. The C-terminus forms an elongated spine to which L12 dimers bind in a sequential fashion forming a multimeric L10(L12)X complex.

Forms part of the ribosomal stalk, playing a central role in the interaction of the ribosome with GTP-bound translation factors. This chain is Large ribosomal subunit protein uL10, found in Helicobacter pylori (strain G27).